A 53-amino-acid polypeptide reads, in one-letter code: Minor histocompatibility protein HMSD variant form (53 aa).

ACC-6 forms a complex with MHC HLA-B*4403. Highly expressed in dendritic cells and primary leukemia cells, especially those of myeloid lineage. ACC-6 expression is limited to cells of the hematopoietic lineage.

Functionally, this splice variant of HMSD is the precursor of the histocompatibility antigen ACC-6. More generally, minor histocompatibility antigens (mHags) refer to immunogenic peptide which, when complexed with MHC, can generate an immune response after recognition by specific T-cells. The peptides are derived from polymorphic intracellular proteins, which are cleaved by normal pathways of antigen processing. The binding of these peptides to MHC class I or class II molecules and its expression on the cell surface can stimulate T-cell responses and thereby trigger graft rejection or graft-versus-host disease (GVHD) after hematopoietic stem cell transplantation from HLA-identical sibling donor. GVHD is a frequent complication after bone marrow transplantation (BMT), due to mismatch of minor histocompatibility antigen in HLA-matched sibling marrow transplants. However, associated with GVHD, a favorable graft-versus-leukemia (GVL) can be induced by donor-recipient disparities in mHags. ACC-6 is presented to the cell surface by MHC HLA-B*4403. This complex specifically elicits donor-cytotoxic T-lymphocyte (CTL) reactivity against hematologic malignancies after treatment by HLA-identical allogenic BMT. It induces cell recognition and lysis by CTL. Immunogenicity of most autosomal mHags results from single-nucleotide polymorphisms that cause amino-acid substitutions within epitopes, leading to the differential recognition of peptides between donor and recipient. The protein is Minor histocompatibility protein HMSD variant form (HMSD) of Homo sapiens (Human).